The chain runs to 285 residues: Acetyl-coenzyme A carboxylase carboxyl transferase subunit beta (285 aa).

The region spanning 22–285 is the CoA carboxyltransferase N-terminal domain; the sequence is LWTKCEACGA…HPGVAYAPGV (264 aa). Zn(2+)-binding residues include C26, C29, C45, and C48. The segment at 26-48 adopts a C4-type zinc-finger fold; it reads CEACGAQIYKKEFQENLHVCPKC.

It belongs to the AccD/PCCB family. In terms of assembly, acetyl-CoA carboxylase is a heterohexamer composed of biotin carboxyl carrier protein (AccB), biotin carboxylase (AccC) and two subunits each of ACCase subunit alpha (AccA) and ACCase subunit beta (AccD). It depends on Zn(2+) as a cofactor.

It is found in the cytoplasm. The enzyme catalyses N(6)-carboxybiotinyl-L-lysyl-[protein] + acetyl-CoA = N(6)-biotinyl-L-lysyl-[protein] + malonyl-CoA. Its pathway is lipid metabolism; malonyl-CoA biosynthesis; malonyl-CoA from acetyl-CoA: step 1/1. Its function is as follows. Component of the acetyl coenzyme A carboxylase (ACC) complex. Biotin carboxylase (BC) catalyzes the carboxylation of biotin on its carrier protein (BCCP) and then the CO(2) group is transferred by the transcarboxylase to acetyl-CoA to form malonyl-CoA. This Thermus thermophilus (strain ATCC BAA-163 / DSM 7039 / HB27) protein is Acetyl-coenzyme A carboxylase carboxyl transferase subunit beta.